The following is a 383-amino-acid chain: tRNA (adenine(58)-N(1))-methyltransferase catalytic subunit TRM61 (383 aa).

Residues Val94, 121-124 (SGSF), Glu139, Arg144, 168-169 (DV), and Asp203 contribute to the S-adenosyl-L-methionine site. Position 302 is a phosphoserine (Ser302).

The protein belongs to the class I-like SAM-binding methyltransferase superfamily. TRM61 family. In terms of assembly, heterotetramer; composed of two copies of TRM6/GCD10 and two copies of TRM61/GCD14.

It localises to the nucleus. The enzyme catalyses adenosine(58) in tRNA + S-adenosyl-L-methionine = N(1)-methyladenosine(58) in tRNA + S-adenosyl-L-homocysteine + H(+). Functionally, catalytic subunit of tRNA (adenine-N(1)-)-methyltransferase, which catalyzes the formation of N(1)-methyladenine at position 58 (m1A58) in initiator methionyl-tRNA. GCD14 is also required for repression of GCN4 mRNA translation by the upstream open reading frames (uORFs) under conditions of amino acid sufficiency. In Saccharomyces cerevisiae (strain ATCC 204508 / S288c) (Baker's yeast), this protein is tRNA (adenine(58)-N(1))-methyltransferase catalytic subunit TRM61 (GCD14).